The sequence spans 348 residues: 3-isopropylmalate dehydrogenase (348 aa).

76 to 87 (GPKWTDPNNRPE) lines the NAD(+) pocket. 4 residues coordinate substrate: arginine 94, arginine 104, arginine 132, and aspartate 217. Positions 217, 241, and 245 each coordinate Mg(2+). 275–287 (GSAPDIAGKNVAN) provides a ligand contact to NAD(+).

The protein belongs to the isocitrate and isopropylmalate dehydrogenases family. LeuB type 1 subfamily. As to quaternary structure, homodimer. Mg(2+) is required as a cofactor. Mn(2+) serves as cofactor.

The protein localises to the cytoplasm. The catalysed reaction is (2R,3S)-3-isopropylmalate + NAD(+) = 4-methyl-2-oxopentanoate + CO2 + NADH. Its pathway is amino-acid biosynthesis; L-leucine biosynthesis; L-leucine from 3-methyl-2-oxobutanoate: step 3/4. In terms of biological role, catalyzes the oxidation of 3-carboxy-2-hydroxy-4-methylpentanoate (3-isopropylmalate) to 3-carboxy-4-methyl-2-oxopentanoate. The product decarboxylates to 4-methyl-2 oxopentanoate. This chain is 3-isopropylmalate dehydrogenase, found in Staphylococcus aureus (strain Mu50 / ATCC 700699).